A 607-amino-acid chain; its full sequence is Phosphatidylinositol 4-kinase LSB6 (607 aa).

Over residues 73–88 the composition is skewed to polar residues; the sequence is NVPSESPRPDQTSGSN. Positions 73–93 are disordered; the sequence is NVPSESPRPDQTSGSNPAVGL. Positions 161–522 constitute a PI3K/PI4K catalytic domain; it reads GRELERIQTG…LVRRTRCQVI (362 aa). The G-loop stretch occupies residues 167–173; that stretch reads IQTGSSG. A disordered region spans residues 318 to 356; sequence KSSGEDINHKPETTRNLTDETEPSKQINSSPISTESEEN. A compositionally biased stretch (basic and acidic residues) spans 319 to 330; the sequence is SSGEDINHKPET. A compositionally biased stretch (polar residues) spans 341-351; the sequence is SKQINSSPIST. Residues 384–392 are catalytic loop; that stretch reads RNTDRGLDN. The activation loop stretch occupies residues 411 to 431; the sequence is AIDNGLSFPWKHPDEWRLYPY.

Belongs to the PI3/PI4-kinase family. As to quaternary structure, interacts with LAS17. The cofactor is Mg(2+). Mn(2+) serves as cofactor.

The protein localises to the cell membrane. It localises to the vacuole membrane. The enzyme catalyses a 1,2-diacyl-sn-glycero-3-phospho-(1D-myo-inositol) + ATP = a 1,2-diacyl-sn-glycero-3-phospho-(1D-myo-inositol 4-phosphate) + ADP + H(+). Functionally, may play a role in endocytic and/or exocytic pathways. The chain is Phosphatidylinositol 4-kinase LSB6 (LSB6) from Saccharomyces cerevisiae (strain ATCC 204508 / S288c) (Baker's yeast).